A 595-amino-acid polypeptide reads, in one-letter code: Aspartate--tRNA(Asp/Asn) ligase (595 aa).

E174 is a binding site for L-aspartate. Residues 198 to 201 (QLFK) are aspartate. An L-aspartate-binding site is contributed by R220. Residues 220 to 222 (RDE) and Q229 each bind ATP. Position 456 (H456) interacts with L-aspartate. Residue E486 coordinates ATP. R493 contributes to the L-aspartate binding site. 538–541 (GFDR) lines the ATP pocket.

The protein belongs to the class-II aminoacyl-tRNA synthetase family. Type 1 subfamily. Homodimer.

Its subcellular location is the cytoplasm. The catalysed reaction is tRNA(Asx) + L-aspartate + ATP = L-aspartyl-tRNA(Asx) + AMP + diphosphate. In terms of biological role, aspartyl-tRNA synthetase with relaxed tRNA specificity since it is able to aspartylate not only its cognate tRNA(Asp) but also tRNA(Asn). Reaction proceeds in two steps: L-aspartate is first activated by ATP to form Asp-AMP and then transferred to the acceptor end of tRNA(Asp/Asn). In Gloeobacter violaceus (strain ATCC 29082 / PCC 7421), this protein is Aspartate--tRNA(Asp/Asn) ligase.